Here is a 345-residue protein sequence, read N- to C-terminus: Putative pyridoxal reductase (345 aa).

The active-site Proton donor is Tyr60.

Belongs to the aldo/keto reductase family.

The protein localises to the cytoplasm. Its subcellular location is the nucleus. The enzyme catalyses pyridoxine + NADP(+) = pyridoxal + NADPH + H(+). Its pathway is cofactor degradation; B6 vitamer degradation; pyridoxal from pyridoxine (dehydrogenase route): step 1/1. Functionally, catalyzes the reduction of pyridoxal (PL) with NADPH and oxidation of pyridoxine (PN) with NADP(+). The sequence is that of Putative pyridoxal reductase from Saccharomyces cerevisiae (strain ATCC 204508 / S288c) (Baker's yeast).